Consider the following 429-residue polypeptide: Glutamate-1-semialdehyde 2,1-aminomutase 2 (429 aa).

Lys268 bears the N6-(pyridoxal phosphate)lysine mark.

The protein belongs to the class-III pyridoxal-phosphate-dependent aminotransferase family. HemL subfamily. As to quaternary structure, homodimer. It depends on pyridoxal 5'-phosphate as a cofactor.

The protein localises to the cytoplasm. The catalysed reaction is (S)-4-amino-5-oxopentanoate = 5-aminolevulinate. Its pathway is porphyrin-containing compound metabolism; protoporphyrin-IX biosynthesis; 5-aminolevulinate from L-glutamyl-tRNA(Glu): step 2/2. The protein is Glutamate-1-semialdehyde 2,1-aminomutase 2 of Bacillus cereus (strain B4264).